A 449-amino-acid polypeptide reads, in one-letter code: Exodeoxyribonuclease 7 large subunit (449 aa).

The protein belongs to the XseA family. As to quaternary structure, heterooligomer composed of large and small subunits.

The protein resides in the cytoplasm. The catalysed reaction is Exonucleolytic cleavage in either 5'- to 3'- or 3'- to 5'-direction to yield nucleoside 5'-phosphates.. Its function is as follows. Bidirectionally degrades single-stranded DNA into large acid-insoluble oligonucleotides, which are then degraded further into small acid-soluble oligonucleotides. The chain is Exodeoxyribonuclease 7 large subunit from Salmonella agona (strain SL483).